We begin with the raw amino-acid sequence, 232 residues long: Probable fimbrial chaperone LpfB (232 aa).

The first 24 residues, 1–24, serve as a signal peptide directing secretion; sequence MDRMMKSKFVALALSLFLSQSVLA.

This sequence belongs to the periplasmic pilus chaperone family.

The protein localises to the periplasm. Its function is as follows. Part of the lpfABCC'DE fimbrial operon. LP fimbriae may participate in the interaction with eukaryotic cells by assisting in microcolony formation. In Escherichia coli O157:H7, this protein is Probable fimbrial chaperone LpfB (lpfB).